Consider the following 145-residue polypeptide: uncharacterized protein (145 aa).

The interval 1 to 49 is disordered; it reads MLSIFKNLLGTSEEDGTTQEANSKDTKGLKEERKRKKRKNKYKIPPGHT. Positions 22–32 are enriched in basic and acidic residues; it reads NSKDTKGLKEE. Basic residues predominate over residues 33–42; sequence RKRKKRKNKY. The residue at position 68 (S68) is a Phosphoserine. The 77-residue stretch at 69–145 folds into the Cytochrome b5 heme-binding domain; it reads PISVTAEELA…LKTSFVGYLV (77 aa). Positions 104 and 127 each coordinate heme.

This sequence belongs to the cytochrome b5 family.

It localises to the cytoplasm. This is an uncharacterized protein from Schizosaccharomyces pombe (strain 972 / ATCC 24843) (Fission yeast).